Consider the following 236-residue polypeptide: Ubiquinone biosynthesis O-methyltransferase (236 aa).

Arg-39, Gly-59, Asp-80, and Met-124 together coordinate S-adenosyl-L-methionine.

The protein belongs to the methyltransferase superfamily. UbiG/COQ3 family.

It carries out the reaction a 3-demethylubiquinol + S-adenosyl-L-methionine = a ubiquinol + S-adenosyl-L-homocysteine + H(+). It catalyses the reaction a 3-(all-trans-polyprenyl)benzene-1,2-diol + S-adenosyl-L-methionine = a 2-methoxy-6-(all-trans-polyprenyl)phenol + S-adenosyl-L-homocysteine + H(+). Its pathway is cofactor biosynthesis; ubiquinone biosynthesis. Functionally, O-methyltransferase that catalyzes the 2 O-methylation steps in the ubiquinone biosynthetic pathway. The protein is Ubiquinone biosynthesis O-methyltransferase of Shewanella pealeana (strain ATCC 700345 / ANG-SQ1).